Here is a 647-residue protein sequence, read N- to C-terminus: Chaperone protein DnaK (647 aa).

Phosphothreonine; by autocatalysis is present on Thr199. Residues 602-647 are disordered; sequence MYAQEQAQAGQQAGPGAGSASAGQSGEKPVEGEVVDAEFEEVKDKK. Residues 604 to 627 show a composition bias toward low complexity; it reads AQEQAQAGQQAGPGAGSASAGQSG.

Belongs to the heat shock protein 70 family.

Acts as a chaperone. This is Chaperone protein DnaK from Nitrosomonas eutropha (strain DSM 101675 / C91 / Nm57).